The following is a 179-amino-acid chain: Large ribosomal subunit protein uL6 (179 aa).

The protein belongs to the universal ribosomal protein uL6 family. In terms of assembly, part of the 50S ribosomal subunit.

This protein binds to the 23S rRNA, and is important in its secondary structure. It is located near the subunit interface in the base of the L7/L12 stalk, and near the tRNA binding site of the peptidyltransferase center. This chain is Large ribosomal subunit protein uL6, found in Synechococcus sp. (strain CC9311).